An 84-amino-acid polypeptide reads, in one-letter code: Hirudin-HM2 (84 aa).

A signal peptide spans 1-20 (MFSLKLFVVFLAVCICVSQA). The interaction with thrombin active site stretch occupies residues 21–23 (VSY). 3 disulfides stabilise this stretch: Cys26-Cys34, Cys36-Cys48, and Cys42-Cys57. Positions 53 to 84 (SGNQCVHGEGTPKPKSQTEGDFEEIPDEDILN) are disordered. A glycan (O-linked (GalNAc...) threonine) is linked at Thr63. Acidic residues predominate over residues 72 to 84 (GDFEEIPDEDILN). The interval 73–84 (DFEEIPDEDILN) is interaction with fibrinogen-binding exosite of thrombin.

It belongs to the protease inhibitor I14 (hirudin) family.

The protein resides in the secreted. Its function is as follows. Hirudin is a potent thrombin-specific protease inhibitor. It forms a stable non-covalent complex with alpha-thrombin, thereby abolishing its ability to cleave fibrinogen. The polypeptide is Hirudin-HM2 (Hirudinaria manillensis (Asian medical leech)).